We begin with the raw amino-acid sequence, 304 residues long: Aspartate carbamoyltransferase catalytic subunit (304 aa).

2 residues coordinate carbamoyl phosphate: arginine 53 and threonine 54. Residue lysine 82 participates in L-aspartate binding. Carbamoyl phosphate-binding residues include arginine 103, histidine 131, and glutamine 134. 2 residues coordinate L-aspartate: arginine 163 and arginine 224. Carbamoyl phosphate contacts are provided by leucine 263 and proline 264.

This sequence belongs to the aspartate/ornithine carbamoyltransferase superfamily. ATCase family. As to quaternary structure, heterooligomer of catalytic and regulatory chains.

The catalysed reaction is carbamoyl phosphate + L-aspartate = N-carbamoyl-L-aspartate + phosphate + H(+). The protein operates within pyrimidine metabolism; UMP biosynthesis via de novo pathway; (S)-dihydroorotate from bicarbonate: step 2/3. Its function is as follows. Catalyzes the condensation of carbamoyl phosphate and aspartate to form carbamoyl aspartate and inorganic phosphate, the committed step in the de novo pyrimidine nucleotide biosynthesis pathway. This Haloarcula marismortui (strain ATCC 43049 / DSM 3752 / JCM 8966 / VKM B-1809) (Halobacterium marismortui) protein is Aspartate carbamoyltransferase catalytic subunit.